We begin with the raw amino-acid sequence, 81 residues long: Omega-conotoxin-like 3 (81 aa).

Residues 1–22 (MKLTCMMIVAVLFLTASIFITA) form the signal peptide. A propeptide spanning residues 23–51 (DNSRNGIENLPRMRRHEMKKPKASKLNKR) is cleaved from the precursor. Intrachain disulfides connect Cys-53-Cys-71, Cys-60-Cys-75, and Cys-70-Cys-79.

It belongs to the conotoxin O1 superfamily. As to expression, expressed by the venom duct.

It localises to the secreted. Functionally, omega-conotoxins act at presynaptic membranes, they bind and block voltage-gated calcium channels (Cav). The polypeptide is Omega-conotoxin-like 3 (Conus imperialis (Imperial cone)).